Here is a 160-residue protein sequence, read N- to C-terminus: Cytochrome b6-f complex subunit 4 (160 aa).

The next 3 membrane-spanning stretches (helical) occupy residues 36–56 (ILYM…GLSI), 95–115 (LVGV…PFIE), and 127–147 (PIAT…GIGA).

Belongs to the cytochrome b family. PetD subfamily. In terms of assembly, the 4 large subunits of the cytochrome b6-f complex are cytochrome b6, subunit IV (17 kDa polypeptide, petD), cytochrome f and the Rieske protein, while the 4 small subunits are petG, petL, petM and petN. The complex functions as a dimer.

It is found in the plastid. It localises to the chloroplast thylakoid membrane. In terms of biological role, component of the cytochrome b6-f complex, which mediates electron transfer between photosystem II (PSII) and photosystem I (PSI), cyclic electron flow around PSI, and state transitions. This is Cytochrome b6-f complex subunit 4 from Gracilaria tenuistipitata var. liui (Red alga).